The following is a 580-amino-acid chain: NADH-ubiquinone oxidoreductase chain 5 (580 aa).

The next 16 membrane-spanning stretches (helical) occupy residues 12-32, 50-70, 92-112, 113-133, 153-173, 183-203, 215-235, 244-264, 274-293, 298-320, 343-363, 367-387, 427-447, 463-483, 496-516, and 560-580; these read FYFL…FLLM, IVMT…VLLI, ILLV…PNLI, SILL…IYFQ, VALL…YIFY, MMII…QIPF, TPVS…YLLI, WWMA…AGLG, IIAL…LSMG, AFFH…GSII, CSCF…AGFY, LILE…LFFF, ICFL…LMFL, LFVC…KLFF, FVGS…NYPL, and IYLL…VLVN.

Belongs to the complex I subunit 5 family.

It is found in the mitochondrion inner membrane. It carries out the reaction a ubiquinone + NADH + 5 H(+)(in) = a ubiquinol + NAD(+) + 4 H(+)(out). Its function is as follows. Core subunit of the mitochondrial membrane respiratory chain NADH dehydrogenase (Complex I) that is believed to belong to the minimal assembly required for catalysis. Complex I functions in the transfer of electrons from NADH to the respiratory chain. The immediate electron acceptor for the enzyme is believed to be ubiquinone. The chain is NADH-ubiquinone oxidoreductase chain 5 (mt:ND5) from Anopheles gambiae (African malaria mosquito).